Reading from the N-terminus, the 65-residue chain is UPF0337 protein BCE_1081 (65 aa).

The segment at 1–28 is disordered; it reads MSGGLKEQITGKVEKTKGQVKEGIGEVT. A compositionally biased stretch (basic and acidic residues) spans 12 to 28; it reads KVEKTKGQVKEGIGEVT.

It belongs to the UPF0337 (CsbD) family.

The chain is UPF0337 protein BCE_1081 from Bacillus cereus (strain ATCC 10987 / NRS 248).